A 266-amino-acid chain; its full sequence is Beta-lactamase OXA-11 (266 aa).

Positions 1 to 20 are cleaved as a signal peptide; sequence MKTFAAYVIIACLSSTALAG. The Acyl-ester intermediate role is filled by Ser67. An N6-carboxylysine modification is found at Lys70. 205–207 contributes to the substrate binding site; sequence KTG.

It belongs to the class-D beta-lactamase family.

It catalyses the reaction a beta-lactam + H2O = a substituted beta-amino acid. In terms of biological role, hydrolyzes carbenicillin, oxacillin and cephalosporin. Does not hydrolyze cefoxitin or carbapenems. This chain is Beta-lactamase OXA-11 (bla), found in Pseudomonas aeruginosa.